A 424-amino-acid polypeptide reads, in one-letter code: Glutamyl-tRNA(Gln) amidotransferase subunit D (424 aa).

The disordered stretch occupies residues 56 to 78; that stretch reads GETANGSRNGGKGCKTNEEELPE. In terms of domain architecture, Asparaginase/glutaminase spans 84 to 413; sequence PKIAILSTGG…EKAAGMLRED (330 aa). Active-site residues include threonine 94, threonine 170, aspartate 171, and lysine 247.

It belongs to the asparaginase 1 family. GatD subfamily. Heterodimer of GatD and GatE.

It carries out the reaction L-glutamyl-tRNA(Gln) + L-glutamine + ATP + H2O = L-glutaminyl-tRNA(Gln) + L-glutamate + ADP + phosphate + H(+). Allows the formation of correctly charged Gln-tRNA(Gln) through the transamidation of misacylated Glu-tRNA(Gln) in organisms which lack glutaminyl-tRNA synthetase. The reaction takes place in the presence of glutamine and ATP through an activated gamma-phospho-Glu-tRNA(Gln). The GatDE system is specific for glutamate and does not act on aspartate. The sequence is that of Glutamyl-tRNA(Gln) amidotransferase subunit D from Methanosarcina acetivorans (strain ATCC 35395 / DSM 2834 / JCM 12185 / C2A).